The primary structure comprises 350 residues: Meiotic driver wtf30 (350 aa).

Positions 1–92 (MKNKYYPLRS…RENHSSGTTD (92 aa)) are disordered. A compositionally biased stretch (basic and acidic residues) spans 11–29 (SIDELSTKNDNEIDLEKGP). Polar residues predominate over residues 57-72 (GANNPNLFNTDESTTP). 7 consecutive transmembrane segments (helical) span residues 97–117 (FLIK…PAVC), 134–154 (WVYF…LWCF), 165–185 (CVKV…IGLF), 190–210 (EMMI…FVYI), 226–246 (CTIS…FWTF), 253–273 (LAKV…TMFL), and 280–300 (WTGC…LFLC).

The protein belongs to the WTF family. In terms of assembly, homomer. Forms protein aggregates. The two isoforms can interact with each other and with themselves. High sequence similarity is required for their interaction.

Its subcellular location is the spore membrane. The protein resides in the vacuole membrane. The protein localises to the ascus epiplasm. It localises to the cytoplasm. It is found in the endoplasmic reticulum membrane. Functionally, promotes unequal transmission of alleles from the parental zygote to progeny spores by acting as poison/antidote system where the poison and antidote proteins are produced from the same locus; the poison component is trans-acting and targets all spores within an ascus whereas the antidote component is spore-specific, leading to poisoning of all progeny that do not inherit the allele. Its function is as follows. Localizes isoform 2 to the vacuole thereby facilitating its degradation. In terms of biological role, forms toxic aggregates that disrupt spore maturation. The protein is Meiotic driver wtf30 of Schizosaccharomyces kambucha (Fission yeast).